The chain runs to 521 residues: DNA damage-binding protein cmr1 (521 aa).

A disordered region spans residues 36–75 (DKIIPKPAPPKPKRASTPRVKREPVKKEAARPTRQSSRLA). Basic and acidic residues predominate over residues 55–66 (VKREPVKKEAAR). WD repeat units follow at residues 183 to 224 (IVPQ…PKIE), 242 to 282 (THSR…STEI), 333 to 373 (LTDH…GKGD), 382 to 422 (EHES…EWKA), and 490 to 521 (DGIT…CLWM).

It belongs to the WD repeat DDB2/WDR76 family.

In terms of biological role, DNA-binding protein that binds to both single- and double-stranded DNA. Binds preferentially to UV-damaged DNA. May be involved in DNA-metabolic processes. In Neurospora crassa (strain ATCC 24698 / 74-OR23-1A / CBS 708.71 / DSM 1257 / FGSC 987), this protein is DNA damage-binding protein cmr1.